A 315-amino-acid chain; its full sequence is MPSFTLIVPTYNAGTARWNEWFHAFQKQTNQPSQLIIIDSSSTDDTRNIASTYTNNIIVISPSEFNHGGTRNKALASAEESDFVVFLTQDAIFENKNALEEILSLFNDKNVAAVCGRQLPHHDANPLAIHARNFNYGTETLIKSKNDIKNLGIKTVFMSNSFAAYRRSVFEALGGFPEHTILAEDMFMAARMIQAGYKIAYCAEASVRHSHNYTPRQEFQRYFDTGVFHACNPWIQRDFGGAGGEGFRFVKSEIQFLLKNAPFWIPRALLTTFAKFLGYKLGKHWQSLPLSTCRYFSMYKSYWNNIQYSSSKEIK.

This sequence belongs to the glycosyltransferase 2 family.

It catalyses the reaction alpha-D-galactosyl-di-trans,octa-cis-undecaprenyl diphosphate + dTDP-beta-L-rhamnose = alpha-L-rhamnosyl-(1-&gt;3)-alpha-D-galactosyl-1-diphospho-di-trans,octa-cis-undecaprenol + dTDP + H(+). The protein operates within bacterial outer membrane biogenesis; LPS O-antigen biosynthesis. In terms of biological role, rhamnosyltransferase involved in the biosynthesis of the repeat unit of the lipopolysaccharide (LPS) O-antigen region. Catalyzes the addition of a rhamnose to the galactosyl-undecaprenyl diphosphate intermediate. The polypeptide is O-antigen chain rhamnosyltransferase WbaN (Salmonella anatum).